Reading from the N-terminus, the 116-residue chain is Ribonuclease P protein component (116 aa).

The protein belongs to the RnpA family. Consists of a catalytic RNA component (M1 or rnpB) and a protein subunit.

The catalysed reaction is Endonucleolytic cleavage of RNA, removing 5'-extranucleotides from tRNA precursor.. Its function is as follows. RNaseP catalyzes the removal of the 5'-leader sequence from pre-tRNA to produce the mature 5'-terminus. It can also cleave other RNA substrates such as 4.5S RNA. The protein component plays an auxiliary but essential role in vivo by binding to the 5'-leader sequence and broadening the substrate specificity of the ribozyme. This is Ribonuclease P protein component from Thermoanaerobacter pseudethanolicus (strain ATCC 33223 / 39E) (Clostridium thermohydrosulfuricum).